Consider the following 181-residue polypeptide: Dehydration-responsive element-binding protein 1E (181 aa).

Positions 14–26 (KKRAGRRIFKETR) match the Nuclear localization signal motif. The segment at residues 29–86 (IYRGVRRRDGDKWVCEVREPIHQRRVWLGTYPTADMAARAHDVAVLALRGRSACLNFS) is a DNA-binding region (AP2/ERF).

Belongs to the AP2/ERF transcription factor family. ERF subfamily.

The protein localises to the nucleus. Its function is as follows. Transcriptional activator that binds specifically to the DNA sequence 5'-[AG]CCGAC-3'. Binding to the C-repeat/DRE element mediates cold or dehydration-inducible transcription. CBF/DREB1 factors play a key role in freezing tolerance and cold acclimation. This chain is Dehydration-responsive element-binding protein 1E (DREB1E), found in Arabidopsis thaliana (Mouse-ear cress).